A 104-amino-acid chain; its full sequence is Large ribosomal subunit protein bL21 (104 aa).

This sequence belongs to the bacterial ribosomal protein bL21 family. As to quaternary structure, part of the 50S ribosomal subunit. Contacts protein L20.

Its function is as follows. This protein binds to 23S rRNA in the presence of protein L20. This Helicobacter hepaticus (strain ATCC 51449 / 3B1) protein is Large ribosomal subunit protein bL21.